We begin with the raw amino-acid sequence, 730 residues long: Pentatricopeptide repeat-containing protein At5g64320, mitochondrial (730 aa).

The transit peptide at 1–18 (MVMLARSKLALDVSRRSQ) directs the protein to the mitochondrion. PPR repeat units follow at residues 110–144 (SFDV…GIVF), 145–175 (KESL…MRNV), 181–215 (TFKS…KIPP), 216–250 (TLFT…GCVP), 251–285 (NSVI…GCVP), 286–320 (DAET…GFAP), 321–351 (DDIT…IPKP), 352–387 (EIVI…GIVP), 388–422 (DVCT…GCKP), 423–457 (NVYS…GLKP), 458–492 (NTVG…GCKP), 493–527 (DVYT…GVVA), 528–562 (NTVT…GSPL), 563–597 (DEIT…GHAP), 598–632 (SNIS…GSTP), 633–667 (DIVT…GIPP), and 668–702 (DTVT…GFVP).

Belongs to the PPR family. P subfamily.

It is found in the mitochondrion. This chain is Pentatricopeptide repeat-containing protein At5g64320, mitochondrial, found in Arabidopsis thaliana (Mouse-ear cress).